Reading from the N-terminus, the 259-residue chain is 7-cyano-7-deazaguanine synthase (259 aa).

ATP is bound at residue L32–L42. Zn(2+) contacts are provided by C223, C233, C236, and C239.

Belongs to the QueC family. Requires Zn(2+) as cofactor.

It catalyses the reaction 7-carboxy-7-deazaguanine + NH4(+) + ATP = 7-cyano-7-deazaguanine + ADP + phosphate + H2O + H(+). Its pathway is purine metabolism; 7-cyano-7-deazaguanine biosynthesis. Catalyzes the ATP-dependent conversion of 7-carboxy-7-deazaguanine (CDG) to 7-cyano-7-deazaguanine (preQ(0)). The chain is 7-cyano-7-deazaguanine synthase from Psychrobacter arcticus (strain DSM 17307 / VKM B-2377 / 273-4).